A 514-amino-acid polypeptide reads, in one-letter code: ATP synthase subunit alpha (514 aa).

170–177 (GDRQTGKT) contacts ATP.

The protein belongs to the ATPase alpha/beta chains family. As to quaternary structure, F-type ATPases have 2 components, CF(1) - the catalytic core - and CF(0) - the membrane proton channel. CF(1) has five subunits: alpha(3), beta(3), gamma(1), delta(1), epsilon(1). CF(0) has three main subunits: a(1), b(2) and c(9-12). The alpha and beta chains form an alternating ring which encloses part of the gamma chain. CF(1) is attached to CF(0) by a central stalk formed by the gamma and epsilon chains, while a peripheral stalk is formed by the delta and b chains.

Its subcellular location is the cell inner membrane. The enzyme catalyses ATP + H2O + 4 H(+)(in) = ADP + phosphate + 5 H(+)(out). Its function is as follows. Produces ATP from ADP in the presence of a proton gradient across the membrane. The alpha chain is a regulatory subunit. The polypeptide is ATP synthase subunit alpha (Psychrobacter arcticus (strain DSM 17307 / VKM B-2377 / 273-4)).